Reading from the N-terminus, the 299-residue chain is Transcription elongation factor A protein 2 (299 aa).

One can recognise a TFIIS N-terminal domain in the interval E6–S83. A Glycyl lysine isopeptide (Lys-Gly) (interchain with G-Cter in ubiquitin) cross-link involves residue K58. Phosphoserine is present on residues S60 and S100. Residues K86–F128 are disordered. Residues D102–L116 are compositionally biased toward basic and acidic residues. The 117-residue stretch at V138–T254 folds into the TFIIS central domain. Residues D257–K297 form a TFIIS-type zinc finger. Residues C261, C264, C289, and C292 each contribute to the Zn(2+) site.

This sequence belongs to the TFS-II family. In terms of assembly, interacts with the basal transcription factor GTF2B. Interacts with REXO1. In terms of tissue distribution, testis and ovary specific.

It localises to the nucleus. Necessary for efficient RNA polymerase II transcription elongation past template-encoded arresting sites. The arresting sites in DNA have the property of trapping a certain fraction of elongating RNA polymerases that pass through, resulting in locked ternary complexes. Cleavage of the nascent transcript by S-II allows the resumption of elongation from the new 3'-terminus. This chain is Transcription elongation factor A protein 2 (TCEA2), found in Homo sapiens (Human).